A 177-amino-acid chain; its full sequence is Bifunctional protein PyrR (177 aa).

The PRPP-binding signature appears at 101 to 113; that stretch reads IILIDDVLYTGRT.

Belongs to the purine/pyrimidine phosphoribosyltransferase family. PyrR subfamily.

It catalyses the reaction UMP + diphosphate = 5-phospho-alpha-D-ribose 1-diphosphate + uracil. Functionally, regulates the transcription of the pyrimidine nucleotide (pyr) operon in response to exogenous pyrimidines. In terms of biological role, also displays a weak uracil phosphoribosyltransferase activity which is not physiologically significant. The polypeptide is Bifunctional protein PyrR (Endomicrobium trichonymphae).